The following is a 201-amino-acid chain: Holliday junction branch migration complex subunit RuvA (201 aa).

The interval 1 to 63 (MYDYIKGTVT…EDNISLFGFQ (63 aa)) is domain I. A domain II region spans residues 64–142 (TTEERYLFKK…DVVASEIVYV (79 aa)). Positions 143–153 (APENDMVAGLS) are flexible linker. A domain III region spans residues 153 to 201 (SPQLEEAVLALEALGYSTRELKKVIPKLAKEADLTSDAYIKLALQLMTK).

This sequence belongs to the RuvA family. Homotetramer. Forms an RuvA(8)-RuvB(12)-Holliday junction (HJ) complex. HJ DNA is sandwiched between 2 RuvA tetramers; dsDNA enters through RuvA and exits via RuvB. An RuvB hexamer assembles on each DNA strand where it exits the tetramer. Each RuvB hexamer is contacted by two RuvA subunits (via domain III) on 2 adjacent RuvB subunits; this complex drives branch migration. In the full resolvosome a probable DNA-RuvA(4)-RuvB(12)-RuvC(2) complex forms which resolves the HJ.

Its subcellular location is the cytoplasm. The RuvA-RuvB-RuvC complex processes Holliday junction (HJ) DNA during genetic recombination and DNA repair, while the RuvA-RuvB complex plays an important role in the rescue of blocked DNA replication forks via replication fork reversal (RFR). RuvA specifically binds to HJ cruciform DNA, conferring on it an open structure. The RuvB hexamer acts as an ATP-dependent pump, pulling dsDNA into and through the RuvAB complex. HJ branch migration allows RuvC to scan DNA until it finds its consensus sequence, where it cleaves and resolves the cruciform DNA. The protein is Holliday junction branch migration complex subunit RuvA of Listeria monocytogenes serovar 1/2a (strain ATCC BAA-679 / EGD-e).